The sequence spans 568 residues: Urease subunit alpha (568 aa).

A Urease domain is found at 130 to 568; sequence GGIDTHIHFI…LPMAQRYFLF (439 aa). 3 residues coordinate Ni(2+): histidine 135, histidine 137, and lysine 218. Lysine 218 is subject to N6-carboxylysine. Histidine 220 contacts substrate. Ni(2+)-binding residues include histidine 247 and histidine 273. The active-site Proton donor is the histidine 321. Ni(2+) is bound at residue aspartate 361.

Belongs to the metallo-dependent hydrolases superfamily. Urease alpha subunit family. Heterotrimer of UreA (gamma), UreB (beta) and UreC (alpha) subunits. Three heterotrimers associate to form the active enzyme. Ni cation is required as a cofactor. Post-translationally, carboxylation allows a single lysine to coordinate two nickel ions.

The protein localises to the cytoplasm. The catalysed reaction is urea + 2 H2O + H(+) = hydrogencarbonate + 2 NH4(+). The protein operates within nitrogen metabolism; urea degradation; CO(2) and NH(3) from urea (urease route): step 1/1. In Burkholderia cenocepacia (strain ATCC BAA-245 / DSM 16553 / LMG 16656 / NCTC 13227 / J2315 / CF5610) (Burkholderia cepacia (strain J2315)), this protein is Urease subunit alpha.